We begin with the raw amino-acid sequence, 477 residues long: Secreted RxLR effector protein 102 (477 aa).

Residues 1–20 (MRGGYYVLTALFVVASSEIA) form the signal peptide. Residues 48-65 (RFLRESRGVHGNVANEER) carry the RxLR-dEER motif. Disordered regions lie at residues 326–345 (SKGQIPYPSEPLNAASTSKG), 351–370 (IKRSKRTSDGNTDIASLPSI), 376–401 (SSKSVMPLLTESTTSGDHSVPAKRSR), and 433–455 (PRSAVDPYTQSKKHSTKALAPSS).

Belongs to the RxLR effector family.

It localises to the secreted. The protein resides in the host nucleus. Secreted effector that acts as an elicitor that induces cell death in host plant cells. This Plasmopara viticola (Downy mildew of grapevine) protein is Secreted RxLR effector protein 102.